The chain runs to 194 residues: Cysteine and glycine-rich protein 3 (194 aa).

Residues 1 to 5 (MPNWG) form an interaction with TCAP region. The 52-residue stretch at 10–61 (CGACEKTVYHAEEIQCNGRSFHKTCFHCMACRKALDSTTVAAHESEIYCKVC) folds into the LIM zinc-binding 1 domain. Positions 64-69 (RRYGPK) match the Nuclear localization signal motif. The tract at residues 94–106 (QSPKQARSATTSS) is interaction with CLF2. A phosphoserine mark is found at Ser-95 and Ser-153. The LIM zinc-binding 2 domain maps to 120–171 (CPRCGKSVYAAEKVMGGGKPWHKTCFRCAICGKSLESTNVTDKDGELYCKVC).

In terms of assembly, self-associates. Oligomeric in the cytoplasm and monomeric in the nucleus. Homooligomers preferentially form along the actin cytoskeleton. Interacts with TCAP, LDHD, MYOD1, MYOG, ACTN2, NRAP, MYF6. Interacts (via N-terminus) with GLRX3 (via C-terminus) and PPP3CA; GLRX3 and calcineurin compete for interaction with CSRP3. Interacts with CFL2; the stoichiometry influences F-actin depolymerization and possibly two molecules of CFL2 can interact with one molecule of CSRP3 resulting in the highest functional impact; the interaction is stronger with phosphorylated CFL2.

The protein resides in the nucleus. It localises to the cytoplasm. Its subcellular location is the cytoskeleton. The protein localises to the myofibril. It is found in the sarcomere. The protein resides in the z line. Its function is as follows. Positive regulator of myogenesis. Acts as a cofactor for myogenic bHLH transcription factors such as MYOD1, and probably MYOG and MYF6. Enhances the DNA-binding activity of the MYOD1:TCF3 isoform E47 complex and may promote formation of a functional MYOD1:TCF3 isoform E47:MEF2A complex involved in myogenesis. Plays a crucial and specific role in the organization of cytosolic structures in cardiomyocytes. Could play a role in mechanical stretch sensing. May be a scaffold protein that promotes the assembly of interacting proteins at Z-line structures. It is essential for calcineurin anchorage to the Z line. Required for stress-induced calcineurin-NFAT activation. The role in regulation of cytoskeleton dynamics by association with CFL2 is reported conflictingly. Proposed to contribute to the maintenance of muscle cell integrity through an actin-based mechanism. Can directly bind to actin filaments, cross-link actin filaments into bundles without polarity selectivity and protect them from dilution- and cofilin-mediated depolymerization; the function seems to involve its self-association. In vitro can inhibit PKC/PRKCA activity. Proposed to be involved in cardiac stress signaling by down-regulating excessive PKC/PRKCA signaling. This chain is Cysteine and glycine-rich protein 3 (CSRP3), found in Bos taurus (Bovine).